The following is a 240-amino-acid chain: Pyridoxine 5'-phosphate synthase (240 aa).

Position 6 (Asn-6) interacts with 3-amino-2-oxopropyl phosphate. 8-9 (DH) provides a ligand contact to 1-deoxy-D-xylulose 5-phosphate. Position 17 (Arg-17) interacts with 3-amino-2-oxopropyl phosphate. His-42 acts as the Proton acceptor in catalysis. 2 residues coordinate 1-deoxy-D-xylulose 5-phosphate: Arg-44 and His-49. The active-site Proton acceptor is Glu-69. Thr-99 lines the 1-deoxy-D-xylulose 5-phosphate pocket. The active-site Proton donor is His-190. 3-amino-2-oxopropyl phosphate contacts are provided by residues Gly-191 and 212-213 (GH).

The protein belongs to the PNP synthase family. In terms of assembly, homooctamer; tetramer of dimers.

It localises to the cytoplasm. The catalysed reaction is 3-amino-2-oxopropyl phosphate + 1-deoxy-D-xylulose 5-phosphate = pyridoxine 5'-phosphate + phosphate + 2 H2O + H(+). The protein operates within cofactor biosynthesis; pyridoxine 5'-phosphate biosynthesis; pyridoxine 5'-phosphate from D-erythrose 4-phosphate: step 5/5. In terms of biological role, catalyzes the complicated ring closure reaction between the two acyclic compounds 1-deoxy-D-xylulose-5-phosphate (DXP) and 3-amino-2-oxopropyl phosphate (1-amino-acetone-3-phosphate or AAP) to form pyridoxine 5'-phosphate (PNP) and inorganic phosphate. The polypeptide is Pyridoxine 5'-phosphate synthase (Pseudomonas entomophila (strain L48)).